Consider the following 354-residue polypeptide: Phospho-N-acetylmuramoyl-pentapeptide-transferase (354 aa).

A run of 10 helical transmembrane segments spans residues 27–47 (ATLL…INML), 73–93 (TMGG…WMDV), 97–117 (LVWA…LDDY), 138–158 (FVVA…YVPV), 162–182 (LYVP…VGAG), 193–213 (GLAI…AYLA), 230–250 (AGEL…FLWF), 256–276 (AVFM…VIAV), 282–302 (IVLA…IVQV), and 331–351 (TVVI…LATL).

The protein belongs to the glycosyltransferase 4 family. MraY subfamily. The cofactor is Mg(2+).

Its subcellular location is the cell inner membrane. It carries out the reaction UDP-N-acetyl-alpha-D-muramoyl-L-alanyl-gamma-D-glutamyl-meso-2,6-diaminopimeloyl-D-alanyl-D-alanine + di-trans,octa-cis-undecaprenyl phosphate = di-trans,octa-cis-undecaprenyl diphospho-N-acetyl-alpha-D-muramoyl-L-alanyl-D-glutamyl-meso-2,6-diaminopimeloyl-D-alanyl-D-alanine + UMP. Its pathway is cell wall biogenesis; peptidoglycan biosynthesis. In terms of biological role, catalyzes the initial step of the lipid cycle reactions in the biosynthesis of the cell wall peptidoglycan: transfers peptidoglycan precursor phospho-MurNAc-pentapeptide from UDP-MurNAc-pentapeptide onto the lipid carrier undecaprenyl phosphate, yielding undecaprenyl-pyrophosphoryl-MurNAc-pentapeptide, known as lipid I. The polypeptide is Phospho-N-acetylmuramoyl-pentapeptide-transferase (Novosphingobium aromaticivorans (strain ATCC 700278 / DSM 12444 / CCUG 56034 / CIP 105152 / NBRC 16084 / F199)).